The chain runs to 357 residues: MSITIQNLNKHFGNFHALKNINLNVPTGKLVSLLGPSGCGKTTLLRIIAGLENADGGNILFDGQDVTAKHVRERKVGFVFQHYALFRHMNVFDNVAFGLTVLPKSERPSKGQIRAKVEELLKLVQLSHLAKSYPHQLSGGQRQRIALARALAVEPKLLLLDEPFGALDAKVRKELRTWLRDIHHNLGVTSILVTHDQEEALEVSDEIVVMNHGKIEQTGSAEAIYRKPENAFVTEFLGETDAFEGRIEKGFWHYNGFAWKLDAQYKWQEQTATGYIRPHEWQIAAEHETPMICAEIEKIHAVGALTHILVKHDKQDVHITLAGSDAARYPIAEGKELKLIPKQVYVFSQNELIEYSI.

The region spanning 3–237 (ITIQNLNKHF…PENAFVTEFL (235 aa)) is the ABC transporter domain. 35-42 (GPSGCGKT) provides a ligand contact to ATP.

Belongs to the ABC transporter superfamily. Sulfate/tungstate importer (TC 3.A.1.6) family. In terms of assembly, the complex is composed of two ATP-binding proteins (CysA), two transmembrane proteins (CysT and CysW) and a solute-binding protein (CysP).

It is found in the cell inner membrane. It catalyses the reaction sulfate(out) + ATP + H2O = sulfate(in) + ADP + phosphate + H(+). The enzyme catalyses thiosulfate(out) + ATP + H2O = thiosulfate(in) + ADP + phosphate + H(+). Part of the ABC transporter complex CysAWTP involved in sulfate/thiosulfate import. Responsible for energy coupling to the transport system. The polypeptide is Sulfate/thiosulfate import ATP-binding protein CysA (Neisseria meningitidis serogroup B (strain ATCC BAA-335 / MC58)).